The chain runs to 239 residues: Octanoyltransferase (239 aa).

A BPL/LPL catalytic domain is found at 48–236; that stretch reads EGGDELVWLV…AFETVFGETV (189 aa). Residues 87-94, 167-169, and 180-182 contribute to the substrate site; these read RGGEYTYH, ALG, and GLS. Cysteine 198 acts as the Acyl-thioester intermediate in catalysis.

This sequence belongs to the LipB family.

The protein resides in the cytoplasm. It catalyses the reaction octanoyl-[ACP] + L-lysyl-[protein] = N(6)-octanoyl-L-lysyl-[protein] + holo-[ACP] + H(+). Its pathway is protein modification; protein lipoylation via endogenous pathway; protein N(6)-(lipoyl)lysine from octanoyl-[acyl-carrier-protein]: step 1/2. Catalyzes the transfer of endogenously produced octanoic acid from octanoyl-acyl-carrier-protein onto the lipoyl domains of lipoate-dependent enzymes. Lipoyl-ACP can also act as a substrate although octanoyl-ACP is likely to be the physiological substrate. The chain is Octanoyltransferase from Rhizobium etli (strain CIAT 652).